We begin with the raw amino-acid sequence, 1086 residues long: DNA polymerase (1086 aa).

Residues Ser638–Thr657 form a disordered region.

This sequence belongs to the DNA polymerase type-B family.

The catalysed reaction is DNA(n) + a 2'-deoxyribonucleoside 5'-triphosphate = DNA(n+1) + diphosphate. Replicates the viral genome. Host DNA polymerases cannot substitute for the viral enzyme in this process. The sequence is that of DNA polymerase from Noctuidae (owlet moths).